Consider the following 187-residue polypeptide: Ubiquinone biosynthesis protein COQ4 homolog, mitochondrial (187 aa).

H77, D78, H81, and E93 together coordinate Zn(2+).

This sequence belongs to the COQ4 family. As to quaternary structure, component of a multi-subunit COQ enzyme complex. The cofactor is Zn(2+).

Its subcellular location is the mitochondrion inner membrane. It catalyses the reaction a 4-hydroxy-3-methoxy-5-(all-trans-polyprenyl)benzoate + H(+) = a 2-methoxy-6-(all-trans-polyprenyl)phenol + CO2. Its pathway is cofactor biosynthesis; ubiquinone biosynthesis. In terms of biological role, lyase that catalyzes the C1-decarboxylation of 4-hydroxy-3-methoxy-5-(all-trans-polyprenyl)benzoic acid into 2-methoxy-6-(all-trans-polyprenyl)phenol during ubiquinone biosynthesis. This is Ubiquinone biosynthesis protein COQ4 homolog, mitochondrial from Leishmania braziliensis.